Here is a 426-residue protein sequence, read N- to C-terminus: 3-phosphoshikimate 1-carboxyvinyltransferase (426 aa).

3-phosphoshikimate is bound by residues Lys-22, Ser-23, and Arg-27. Lys-22 contacts phosphoenolpyruvate. Phosphoenolpyruvate-binding residues include Gly-96 and Arg-124. 3-phosphoshikimate is bound by residues Ser-170, Ser-171, Gln-172, Ser-198, Asp-314, Asn-337, and Lys-341. Residue Gln-172 coordinates phosphoenolpyruvate. Asp-314 (proton acceptor) is an active-site residue. Phosphoenolpyruvate-binding residues include Arg-345, Arg-387, and Lys-412.

Belongs to the EPSP synthase family. In terms of assembly, monomer.

The protein localises to the cytoplasm. The catalysed reaction is 3-phosphoshikimate + phosphoenolpyruvate = 5-O-(1-carboxyvinyl)-3-phosphoshikimate + phosphate. Its pathway is metabolic intermediate biosynthesis; chorismate biosynthesis; chorismate from D-erythrose 4-phosphate and phosphoenolpyruvate: step 6/7. Its function is as follows. Catalyzes the transfer of the enolpyruvyl moiety of phosphoenolpyruvate (PEP) to the 5-hydroxyl of shikimate-3-phosphate (S3P) to produce enolpyruvyl shikimate-3-phosphate and inorganic phosphate. The protein is 3-phosphoshikimate 1-carboxyvinyltransferase of Colwellia psychrerythraea (strain 34H / ATCC BAA-681) (Vibrio psychroerythus).